The primary structure comprises 439 residues: Ribosomal protein uS12 methylthiotransferase RimO (439 aa).

The 111-residue stretch at 3-113 (HKVGFVSLGC…VVNAVHQHLP (111 aa)) folds into the MTTase N-terminal domain. Residues C12, C48, C77, C144, C148, and C151 each coordinate [4Fe-4S] cluster. In terms of domain architecture, Radical SAM core spans 130–367 (LTPRHYAYLK…MQVQAEISRN (238 aa)). The TRAM domain occupies 370-436 (KNKIGSTQTV…DYDLYGDLEY (67 aa)).

This sequence belongs to the methylthiotransferase family. RimO subfamily. Requires [4Fe-4S] cluster as cofactor.

It localises to the cytoplasm. It carries out the reaction L-aspartate(89)-[ribosomal protein uS12]-hydrogen + (sulfur carrier)-SH + AH2 + 2 S-adenosyl-L-methionine = 3-methylsulfanyl-L-aspartate(89)-[ribosomal protein uS12]-hydrogen + (sulfur carrier)-H + 5'-deoxyadenosine + L-methionine + A + S-adenosyl-L-homocysteine + 2 H(+). Catalyzes the methylthiolation of an aspartic acid residue of ribosomal protein uS12. This is Ribosomal protein uS12 methylthiotransferase RimO from Legionella pneumophila (strain Paris).